The chain runs to 89 residues: Small ribosomal subunit protein uS15 (89 aa).

The protein belongs to the universal ribosomal protein uS15 family. In terms of assembly, part of the 30S ribosomal subunit. Forms a bridge to the 50S subunit in the 70S ribosome, contacting the 23S rRNA.

Its function is as follows. One of the primary rRNA binding proteins, it binds directly to 16S rRNA where it helps nucleate assembly of the platform of the 30S subunit by binding and bridging several RNA helices of the 16S rRNA. Forms an intersubunit bridge (bridge B4) with the 23S rRNA of the 50S subunit in the ribosome. In Chloroflexus aurantiacus (strain ATCC 29366 / DSM 635 / J-10-fl), this protein is Small ribosomal subunit protein uS15.